Consider the following 421-residue polypeptide: D-amino acid dehydrogenase (421 aa).

3-17 serves as a coordination point for FAD; that stretch reads VIVLGSGVIGVASAY.

This sequence belongs to the DadA oxidoreductase family. Requires FAD as cofactor.

It catalyses the reaction a D-alpha-amino acid + A + H2O = a 2-oxocarboxylate + AH2 + NH4(+). The protein operates within amino-acid degradation; D-alanine degradation; NH(3) and pyruvate from D-alanine: step 1/1. Its function is as follows. Oxidative deamination of D-amino acids. In Acinetobacter baumannii (strain ATCC 17978 / DSM 105126 / CIP 53.77 / LMG 1025 / NCDC KC755 / 5377), this protein is D-amino acid dehydrogenase.